Consider the following 390-residue polypeptide: Dual-specificity RNA methyltransferase RlmN (390 aa).

Catalysis depends on glutamate 110, which acts as the Proton acceptor. A Radical SAM core domain is found at 116-355; it reads EADRATLCVS…VIIRKTRGDD (240 aa). The cysteines at positions 123 and 360 are disulfide-linked. Cysteine 130, cysteine 134, and cysteine 137 together coordinate [4Fe-4S] cluster. Residues 184-185, serine 216, 238-240, and asparagine 317 each bind S-adenosyl-L-methionine; these read GE and SLH. Cysteine 360 serves as the catalytic S-methylcysteine intermediate.

The protein belongs to the radical SAM superfamily. RlmN family. [4Fe-4S] cluster is required as a cofactor.

It localises to the cytoplasm. The enzyme catalyses adenosine(2503) in 23S rRNA + 2 reduced [2Fe-2S]-[ferredoxin] + 2 S-adenosyl-L-methionine = 2-methyladenosine(2503) in 23S rRNA + 5'-deoxyadenosine + L-methionine + 2 oxidized [2Fe-2S]-[ferredoxin] + S-adenosyl-L-homocysteine. It catalyses the reaction adenosine(37) in tRNA + 2 reduced [2Fe-2S]-[ferredoxin] + 2 S-adenosyl-L-methionine = 2-methyladenosine(37) in tRNA + 5'-deoxyadenosine + L-methionine + 2 oxidized [2Fe-2S]-[ferredoxin] + S-adenosyl-L-homocysteine. Specifically methylates position 2 of adenine 2503 in 23S rRNA and position 2 of adenine 37 in tRNAs. m2A2503 modification seems to play a crucial role in the proofreading step occurring at the peptidyl transferase center and thus would serve to optimize ribosomal fidelity. The polypeptide is Dual-specificity RNA methyltransferase RlmN (Haemophilus influenzae (strain PittEE)).